A 784-amino-acid polypeptide reads, in one-letter code: Homeobox-leucine zipper protein ROC2 (784 aa).

The disordered stretch occupies residues 60–113 (AESGDNMIRSRASDPLGGDEFESKSGSENVDGVSVDDQDPNQRPRKKRYHRHTQ). Residues 102-113 (RPRKKRYHRHTQ) show a composition bias toward basic residues. Residues 104–163 (RKKRYHRHTQHQIQEMEAFFKECPHPDDKQRKELSRELGLEPLQVKFWFQNKRTQMKNQH) constitute a DNA-binding region (homeobox). Residues 158–234 (QMKNQHERHE…DRISAIAAKY (77 aa)) adopt a coiled-coil conformation. Residues 286–523 (SEVDKPMIVE…LDRQCERLAS (238 aa)) enclose the START domain.

This sequence belongs to the HD-ZIP homeobox family. Class IV subfamily.

Its subcellular location is the nucleus. Functionally, probable transcription factor. In Oryza sativa subsp. japonica (Rice), this protein is Homeobox-leucine zipper protein ROC2 (ROC2).